The primary structure comprises 55 residues: ATP synthase protein 8 (55 aa).

The chain crosses the membrane as a helical span at residues 6–26; that stretch reads PHPWFAILVFSWIFFLVILPK.

It belongs to the ATPase protein 8 family. In terms of assembly, F-type ATPases have 2 components, CF(1) - the catalytic core - and CF(0) - the membrane proton channel.

It is found in the mitochondrion membrane. In terms of biological role, mitochondrial membrane ATP synthase (F(1)F(0) ATP synthase or Complex V) produces ATP from ADP in the presence of a proton gradient across the membrane which is generated by electron transport complexes of the respiratory chain. F-type ATPases consist of two structural domains, F(1) - containing the extramembraneous catalytic core and F(0) - containing the membrane proton channel, linked together by a central stalk and a peripheral stalk. During catalysis, ATP synthesis in the catalytic domain of F(1) is coupled via a rotary mechanism of the central stalk subunits to proton translocation. Part of the complex F(0) domain. Minor subunit located with subunit a in the membrane. The sequence is that of ATP synthase protein 8 (MT-ATP8) from Squalus acanthias (Spiny dogfish).